Reading from the N-terminus, the 301-residue chain is MSAGLETFALKEEDAIKLLACQTHVGAANCDFQMEQYVWKRRADGIHIIHLRKTWEKLLLAARAIAAIDNPGDVCVVSARPYAQRALLKFAAHTGSTPIFGRFTPGCLTNQIQKQFKEPRLLIVSDPRVDHQAVTEASYVGVPVISFCNTDSPLKFIDIAIPCNNKGVQSIGLMWWLLAREVLLIKGKMTRQTGFVLDDKEIMPDLYFYRNPEEQEKEELAEPREVKEPWPGVPPPEVAKIDEVVRSIGMYQTIGGVEPAKKLDFSMVEPVSDWAQETERAVQLDAAQQQEWGASTQNSNW.

Belongs to the universal ribosomal protein uS2 family. As to quaternary structure, component of the small ribosomal subunit. Mature ribosomes consist of a small (40S) and a large (60S) subunit. The 40S subunit contains about 33 different proteins and 1 molecule of RNA (18S). The 60S subunit contains about 49 different proteins and 3 molecules of RNA (28S, 5.8S and 5S). Interacts with ribosomal protein S21.

The protein resides in the cytoplasm. Functionally, required for the assembly and/or stability of the 40S ribosomal subunit. Required for the processing of the 20S rRNA-precursor to mature 18S rRNA in a late step of the maturation of 40S ribosomal subunits. This chain is Small ribosomal subunit protein uS2, found in Brugia malayi (Filarial nematode worm).